Here is a 276-residue protein sequence, read N- to C-terminus: CDP-diacylglycerol--serine O-phosphatidyltransferase (276 aa).

The interval 1–21 (MVESDEDFAPQEFPHTDTDVI) is disordered. A phosphoserine mark is found at Ser-4, Ser-34, Ser-42, Ser-46, Ser-47, and Ser-50. A run of 4 helical transmembrane segments spans residues 82–102 (MADYITMLNGFSGFYSIVSCL), 163–183 (IAFAIGFQTTFDVMILSFFVL), 210–230 (YFEGLPMPTTLALVLGMAYCV), and 248–268 (QILEFHPIILVFFIHGCGMIS).

It belongs to the CDP-alcohol phosphatidyltransferase class-I family. It depends on Mn(2+) as a cofactor. The cofactor is Mg(2+).

It is found in the microsome membrane. It localises to the endoplasmic reticulum membrane. The protein resides in the mitochondrion outer membrane. The enzyme catalyses a CDP-1,2-diacyl-sn-glycerol + L-serine = a 1,2-diacyl-sn-glycero-3-phospho-L-serine + CMP + H(+). It functions in the pathway phospholipid metabolism; phosphatidylethanolamine biosynthesis; phosphatidylethanolamine from CDP-diacylglycerol: step 1/2. Its function is as follows. Catalyzes the synthesis of phosphatidylserine (PtdSer). The protein is CDP-diacylglycerol--serine O-phosphatidyltransferase (CHO1) of Saccharomyces cerevisiae (strain ATCC 204508 / S288c) (Baker's yeast).